A 217-amino-acid polypeptide reads, in one-letter code: Enolase-phosphatase E1 (217 aa).

Mg(2+) is bound by residues Asp-9 and Glu-11. Residues 112 to 113 (SS) and Lys-151 contribute to the substrate site. Asp-176 is a binding site for Mg(2+).

This sequence belongs to the HAD-like hydrolase superfamily. MasA/MtnC family. Monomer. Mg(2+) is required as a cofactor.

It localises to the cytoplasm. Its subcellular location is the nucleus. The enzyme catalyses 5-methylsulfanyl-2,3-dioxopentyl phosphate + H2O = 1,2-dihydroxy-5-(methylsulfanyl)pent-1-en-3-one + phosphate. It functions in the pathway amino-acid biosynthesis; L-methionine biosynthesis via salvage pathway; L-methionine from S-methyl-5-thio-alpha-D-ribose 1-phosphate: step 3/6. It participates in amino-acid biosynthesis; L-methionine biosynthesis via salvage pathway; L-methionine from S-methyl-5-thio-alpha-D-ribose 1-phosphate: step 4/6. In terms of biological role, bifunctional enzyme that catalyzes the enolization of 2,3-diketo-5-methylthiopentyl-1-phosphate (DK-MTP-1-P) into the intermediate 2-hydroxy-3-keto-5-methylthiopentenyl-1-phosphate (HK-MTPenyl-1-P), which is then dephosphorylated to form the acireductone 1,2-dihydroxy-3-keto-5-methylthiopentene (DHK-MTPene). This is Enolase-phosphatase E1 from Lachancea thermotolerans (strain ATCC 56472 / CBS 6340 / NRRL Y-8284) (Yeast).